A 171-amino-acid chain; its full sequence is Adenine phosphoribosyltransferase (171 aa).

The protein belongs to the purine/pyrimidine phosphoribosyltransferase family. As to quaternary structure, homodimer.

It localises to the cytoplasm. The enzyme catalyses AMP + diphosphate = 5-phospho-alpha-D-ribose 1-diphosphate + adenine. It participates in purine metabolism; AMP biosynthesis via salvage pathway; AMP from adenine: step 1/1. Catalyzes a salvage reaction resulting in the formation of AMP, that is energically less costly than de novo synthesis. In Natranaerobius thermophilus (strain ATCC BAA-1301 / DSM 18059 / JW/NM-WN-LF), this protein is Adenine phosphoribosyltransferase.